Reading from the N-terminus, the 319-residue chain is F-box only protein 8 (319 aa).

Positions 68-111 (FINLEMLPPELSFTILSYLNATDLCLASCVWQDLANDELLWQGL) constitute an F-box domain. Residues 146–276 (FNANPDEGVN…LILLSIDLTS (131 aa)) form the SEC7 domain.

Functionally, may promote guanine-nucleotide exchange on an ARF. Promotes the activation of ARF through replacement of GDP with GTP (Potential). This chain is F-box only protein 8 (FBXO8), found in Bos taurus (Bovine).